Reading from the N-terminus, the 250-residue chain is Ribosomal RNA small subunit methyltransferase J (250 aa).

Residues 96–97 (RD) and Asp168 each bind S-adenosyl-L-methionine.

This sequence belongs to the methyltransferase superfamily. RsmJ family.

Its subcellular location is the cytoplasm. The enzyme catalyses guanosine(1516) in 16S rRNA + S-adenosyl-L-methionine = N(2)-methylguanosine(1516) in 16S rRNA + S-adenosyl-L-homocysteine + H(+). Specifically methylates the guanosine in position 1516 of 16S rRNA. In Neisseria gonorrhoeae (strain NCCP11945), this protein is Ribosomal RNA small subunit methyltransferase J.